Consider the following 482-residue polypeptide: Complement C1r subcomponent-like protein (482 aa).

A signal peptide spans 1–43 (MSGFRGLVPELENSLWSSPTTSCMSKMCWWLLWGILHTCPTQA). A CUB domain is found at 44 to 166 (SVLLAQQSPQ…KGFLALYQAV (123 aa)). Cystine bridges form between cysteine 97–cysteine 115 and cysteine 190–cysteine 223. Positions 166–225 (VAVNQPNGDTEAVTTPGAPKIQNHCQDPYYKADQTGTLSCPSSWKWKDRQDGGEVPECVP) constitute a Sushi domain. The 240-residue stretch at 240 to 479 (TFGSSRAKLG…YMDWIKRVIE (240 aa)) folds into the Peptidase S1 domain. Catalysis depends on charge relay system residues histidine 278 and aspartate 334. N-linked (GlcNAc...) asparagine glycosylation is present at asparagine 358. 2 cysteine pairs are disulfide-bonded: cysteine 397–cysteine 416 and cysteine 427–cysteine 457. Serine 431 serves as the catalytic Charge relay system.

It belongs to the peptidase S1 family. As to expression, expressed in liver (at protein level).

Its subcellular location is the secreted. In terms of biological role, mediates the proteolytic cleavage of HP/haptoglobin in the endoplasmic reticulum. The protein is Complement C1r subcomponent-like protein (C1rl) of Mus musculus (Mouse).